The following is an 88-amino-acid chain: Small ribosomal subunit protein uS19 (88 aa).

Belongs to the universal ribosomal protein uS19 family.

In terms of biological role, protein S19 forms a complex with S13 that binds strongly to the 16S ribosomal RNA. This is Small ribosomal subunit protein uS19 from Mycoplasma mycoides subsp. mycoides SC (strain CCUG 32753 / NCTC 10114 / PG1).